A 132-amino-acid chain; its full sequence is Small ribosomal subunit protein uS9 (132 aa).

Belongs to the universal ribosomal protein uS9 family.

The polypeptide is Small ribosomal subunit protein uS9 (rps9) (Thermoplasma volcanium (strain ATCC 51530 / DSM 4299 / JCM 9571 / NBRC 15438 / GSS1)).